The primary structure comprises 99 residues: Small ribosomal subunit protein bS18 (99 aa).

The tract at residues 1–25 (MAESKGRPGSASQRPTGGDKAIAGQ) is disordered.

It belongs to the bacterial ribosomal protein bS18 family. As to quaternary structure, part of the 30S ribosomal subunit. Forms a tight heterodimer with protein bS6.

Binds as a heterodimer with protein bS6 to the central domain of the 16S rRNA, where it helps stabilize the platform of the 30S subunit. In Solibacter usitatus (strain Ellin6076), this protein is Small ribosomal subunit protein bS18.